Here is a 1177-residue protein sequence, read N- to C-terminus: Lysylphosphatidylglycerol biosynthesis bifunctional protein LysX (1177 aa).

Disordered stretches follow at residues 1 to 40 (MRRAGRSRQFSSVEEAFSTSAARPGPRGRRSGRENTAKFV) and 61 to 85 (VTLASPGSRSGSGPRSGPRLGPRNR). Residues 1 to 676 (MRRAGRSRQF…LLHHDGSAPD (676 aa)) form a phosphatidylglycerol lysyltransferase region. Over residues 65–85 (SPGSRSGSGPRSGPRLGPRNR) the composition is skewed to low complexity. 6 consecutive transmembrane segments (helical) span residues 93–113 (VPAAAGWTVGVIATVSLLGSV), 135–155 (FPDTSIAWSFVLALLAAALTA), 159–179 (IAWLLLLGNMILAAALNVADI), 189–209 (IFGENLGFAVHIVAIVLLVLA), 227–247 (AVLVAGDVVGILVSWGLVELF), and 281–301 (VFLNAIFGLFGALALIMATIV). Residues 673–693 (SAPDVSGLRPERTDAEEARSR) form a disordered region. The interval 677–1177 (VSGLRPERTD…TLPFPLAKPH (501 aa)) is lysine--tRNA ligase. Over residues 681-693 (RPERTDAEEARSR) the composition is skewed to basic and acidic residues. The OB DNA-binding region spans 738 to 816 (ITVAGRILRI…SLIVTDWRMI (79 aa)). Mg(2+) contacts are provided by D1089 and E1096.

It in the N-terminal section; belongs to the LPG synthetase family. The protein in the C-terminal section; belongs to the class-II aminoacyl-tRNA synthetase family. Mg(2+) serves as cofactor.

The protein localises to the cell membrane. It catalyses the reaction tRNA(Lys) + L-lysine + ATP = L-lysyl-tRNA(Lys) + AMP + diphosphate. The enzyme catalyses L-lysyl-tRNA(Lys) + a 1,2-diacyl-sn-glycero-3-phospho-(1'-sn-glycerol) = a 1,2-diacyl-sn-glycero-3-phospho-1'-(3'-O-L-lysyl)-sn-glycerol + tRNA(Lys). In terms of biological role, catalyzes the production of L-lysyl-tRNA(Lys)transfer and the transfer of a lysyl group from L-lysyl-tRNA(Lys) to membrane-bound phosphatidylglycerol (PG), which produces lysylphosphatidylglycerol (LPG), one of the components of the bacterial membrane with a positive net charge. LPG synthesis contributes to the resistance to cationic antimicrobial peptides (CAMPs) and likely protects M.tuberculosis against the CAMPs produced by competiting microorganisms (bacteriocins). In fact, the modification of anionic phosphatidylglycerol with positively charged L-lysine results in repulsion of the peptides. This Mycolicibacterium paratuberculosis (strain ATCC BAA-968 / K-10) (Mycobacterium paratuberculosis) protein is Lysylphosphatidylglycerol biosynthesis bifunctional protein LysX (lysX).